We begin with the raw amino-acid sequence, 243 residues long: Phomoidride biosynthesis cluster protein B (243 aa).

It belongs to the tstB family.

Its function is as follows. Phosphatidylethanolamine-binding protein; part of the gene cluster that mediates the biosynthesis of the antihypercholesterolemic agents phomoidrides which are dimeric anhydrides. Within the pathway, tstB is not essential for dimerization and its function has still to be determined. The pathway begins with the highly reducing polyketide synthase tstA that catalyzes the formation of a C12-fatty acyl-ACP, starting from one acetate and 5 malonate units. The hydrolase tstM is involved in the release of the C12-fatty acyl chain from phiA. The alkylcitrate synthase (ACS) tstJ and the alkylcitrate dehydratase (ACDH) tstI then give rise to decarboxylated monomeric anhydrides by coupling the C12-fatty acyl chain with oxalacetic acid. The cyclase tstC is responsible for the dimerization of the monomeric anhydrides which leads to the production of prephomoidride that contains the characteristic bicyclo[4.3.1]deca-1,6-diene system of phomoidrides. Iterative oxidation catalyzed by the alpha-ketoglutarate-dependent dioxygenase tstK produced then phomoidride A. Finally, the methyltransferase tstE converts phomoidride A to phomoidride B via an acetalization reaction. The phosphatidylethanolamine-binding protein tstB and tstN are not essential for dimerization and their functions have still to be determined. This chain is Phomoidride biosynthesis cluster protein B, found in Talaromyces stipitatus (strain ATCC 10500 / CBS 375.48 / QM 6759 / NRRL 1006) (Penicillium stipitatum).